A 592-amino-acid polypeptide reads, in one-letter code: E3 ubiquitin-protein ligase RNF180 (592 aa).

At Met-1 to Asp-564 the chain is on the cytoplasmic side. Ser-230 carries the phosphoserine modification. The RING-type zinc finger occupies Cys-432–Arg-474. Residues Met-565–Leu-585 form a helical membrane-spanning segment. The Extracellular portion of the chain corresponds to Cys-586–Phe-592.

In terms of assembly, interacts with ZIC2.

The protein localises to the endoplasmic reticulum membrane. Its subcellular location is the nucleus envelope. It catalyses the reaction S-ubiquitinyl-[E2 ubiquitin-conjugating enzyme]-L-cysteine + [acceptor protein]-L-lysine = [E2 ubiquitin-conjugating enzyme]-L-cysteine + N(6)-ubiquitinyl-[acceptor protein]-L-lysine.. It participates in protein modification; protein ubiquitination. Functionally, E3 ubiquitin-protein ligase which promotes polyubiquitination and degradation by the proteasome pathway of ZIC2. The polypeptide is E3 ubiquitin-protein ligase RNF180 (RNF180) (Pongo abelii (Sumatran orangutan)).